A 394-amino-acid chain; its full sequence is MAAASGYTDLREKLKSMTSRDNYKAGSREAAAAAAAAVAAAAAAAAAAEPYAAPGVKRKYPEDSDPERSDFEEQQLQKEEEARKVKSGIRQMRLFSQDECAKIEARIDEVVSRAEKGLYNEHTVDRAPLRNKYFFGEGYTYGAQLQKRGPGQERLYPPGDVDEIPEWVHQLVIQKLVEHRVIPEGFVNSAVINDYQPGGCIVSHVDPIHIFERPIVSVSFFSDSALCFGCKFQFKPIRVSEPVLSLPVRRGSVTVLSGYAADEITHCIRPQDIKERRAVIILRKTRLDAPRLETKSLSSSVLPPSYASDRLSGNNRDPALKPKRSHRKADPDAAHRPRILEMDKEENRRSVLLPAHRRAGRFSSENYRRKSYEPGEDCSEAAGSPARKVKMRRH.

Disordered stretches follow at residues Met1–Gly26 and Ala48–Arg83. Residue Ala2 is modified to N-acetylalanine. Lys57 participates in a covalent cross-link: Glycyl lysine isopeptide (Lys-Gly) (interchain with G-Cter in ubiquitin). Residues Lys59 to Arg83 show a composition bias toward basic and acidic residues. Phosphoserine occurs at positions 64 and 69. Residues Glu67–Lys116 are a coiled coil. Residue Lys86 forms a Glycyl lysine isopeptide (Lys-Gly) (interchain with G-Cter in SUMO1) linkage. The residue at position 87 (Ser87) is a Phosphoserine. The residue at position 132 (Lys132) is an N6-acetyllysine. The active site involves Tyr139. 2-oxoglutarate-binding residues include Asn193, Tyr195, and His204. An intrachain disulfide couples Cys230 to Cys267. An N6-acetyllysine modification is found at Lys235. His266 and Arg277 together coordinate 2-oxoglutarate. The segment at Ser298 to His394 is disordered. Residue Lys321 forms a Glycyl lysine isopeptide (Lys-Gly) (interchain with G-Cter in SUMO1) linkage. Ser325 is modified (phosphoserine). Residue Lys328 forms a Glycyl lysine isopeptide (Lys-Gly) (interchain with G-Cter in SUMO2) linkage. The segment covering Lys328–Arg349 has biased composition (basic and acidic residues). 2 positions are modified to phosphoserine: Ser371 and Ser384.

Belongs to the alkB family. Monomer. Interacts with RBM33; promoting desumoylation by SENP1 and recruitment to N(6)-methyladenosine-containing mRNAs. Interacts (when acetylated by KAT8) with PSPC1; interaction facilitates recognition of N(6)-methyladenosine (m6A) mRNA. Fe(2+) is required as a cofactor. In terms of processing, phosphorylated at Ser-87 and Ser-325 in response to reactive oxygen species (ROS), promoting sumoylation and inactivation. Acetylated by KAT8 at Lys-235, promoting interaction with PSPC1, thereby facilitating recognition of N(6)-methyladenosine (m6A) mRNA by ALKBH5. Deacetylated at Lys-235 by HDAC7. Post-translationally, sumoylated at Lys-86 and Lys-321 by PIAS4 following phosphorylation at Ser-87 and Ser-325 in response to reactive oxygen species (ROS), inhibiting the RNA demethylase activity. Desumoylated by SENP1; relieving RNA demethylase inhibition, leading to N(6)-methyladenosine-containing mRNAs demethylation. In terms of processing, ubiquitinated at Lys-57 via 'Lys-48'-linked polyubiquitin chain, leading to its degradation by the proteasome. Deubiquitinated at Lys-57 by USP9X, promoting its stabilizazion.

The protein localises to the nucleus speckle. The catalysed reaction is an N(6)-methyladenosine in mRNA + 2-oxoglutarate + O2 = an adenosine in mRNA + formaldehyde + succinate + CO2. With respect to regulation, RNA demethylase activity is inhibited following sumoylation. Inhibition is relieved following desumoylation. In terms of biological role, dioxygenase that specifically demethylates N(6)-methyladenosine (m6A) RNA, the most prevalent internal modification of messenger RNA (mRNA) in higher eukaryotes. Demethylates RNA by oxidative demethylation, which requires molecular oxygen, alpha-ketoglutarate and iron. Demethylation of m6A mRNA affects mRNA processing, translation and export. Can also demethylate N(6)-methyladenosine in single-stranded DNA (in vitro). Required for the late meiotic and haploid phases of spermatogenesis by mediating m6A demethylation in spermatocytes and round spermatids: m6A demethylation of target transcripts is required for correct splicing and the production of longer 3'-UTR mRNAs in male germ cells. Involved in paraspeckle assembly, a nuclear membraneless organelle, by undergoing liquid-liquid phase separation. Paraspeckle assembly is coupled with m6A demethylation of RNAs, such as NEAT1 non-coding RNA. Also acts as a negative regulator of T-cell development: inhibits gamma-delta T-cell proliferation via demethylation of JAG1 and NOTCH2 transcripts. Inhibits regulatory T-cell (Treg) recruitment by mediating demethylation and destabilization of CCL28 mRNAs. The protein is RNA demethylase ALKBH5 (ALKBH5) of Bos taurus (Bovine).